Consider the following 334-residue polypeptide: Protein-methionine-sulfoxide reductase catalytic subunit MsrP (334 aa).

The tat-type signal signal peptide spans 1–44 (MKKIRPLTEADVTAESAFFMQRRQVLKALGISAAALSLPSTAQA). Residues asparagine 88, 91-92 (YE), cysteine 146, threonine 181, asparagine 233, arginine 238, and 249-251 (GIK) each bind Mo-molybdopterin.

Belongs to the MsrP family. As to quaternary structure, heterodimer of a catalytic subunit (MsrP) and a heme-binding subunit (MsrQ). The cofactor is Mo-molybdopterin. In terms of processing, predicted to be exported by the Tat system. The position of the signal peptide cleavage has not been experimentally proven.

It is found in the periplasm. It carries out the reaction L-methionyl-[protein] + a quinone + H2O = L-methionyl-(S)-S-oxide-[protein] + a quinol. The enzyme catalyses L-methionyl-[protein] + a quinone + H2O = L-methionyl-(R)-S-oxide-[protein] + a quinol. Its function is as follows. Part of the MsrPQ system that repairs oxidized periplasmic proteins containing methionine sulfoxide residues (Met-O), using respiratory chain electrons. Thus protects these proteins from oxidative-stress damage caused by reactive species of oxygen and chlorine generated by the host defense mechanisms. MsrPQ is essential for the maintenance of envelope integrity under bleach stress, rescuing a wide series of structurally unrelated periplasmic proteins from methionine oxidation, including the primary periplasmic chaperone SurA and the lipoprotein Pal. The catalytic subunit MsrP is non-stereospecific, being able to reduce both (R-) and (S-) diastereoisomers of methionine sulfoxide. The polypeptide is Protein-methionine-sulfoxide reductase catalytic subunit MsrP (Salmonella newport (strain SL254)).